Reading from the N-terminus, the 1226-residue chain is DNA-directed RNA polymerase subunit beta (1226 aa).

This sequence belongs to the RNA polymerase beta chain family. The RNAP catalytic core consists of 2 alpha, 1 beta, 1 beta' and 1 omega subunit. When a sigma factor is associated with the core the holoenzyme is formed, which can initiate transcription.

It catalyses the reaction RNA(n) + a ribonucleoside 5'-triphosphate = RNA(n+1) + diphosphate. Functionally, DNA-dependent RNA polymerase catalyzes the transcription of DNA into RNA using the four ribonucleoside triphosphates as substrates. The sequence is that of DNA-directed RNA polymerase subunit beta from Leptospira borgpetersenii serovar Hardjo-bovis (strain JB197).